Reading from the N-terminus, the 383-residue chain is Lipid-A-disaccharide synthase (383 aa).

This sequence belongs to the LpxB family.

The enzyme catalyses a lipid X + a UDP-2-N,3-O-bis[(3R)-3-hydroxyacyl]-alpha-D-glucosamine = a lipid A disaccharide + UDP + H(+). The protein operates within bacterial outer membrane biogenesis; LPS lipid A biosynthesis. Functionally, condensation of UDP-2,3-diacylglucosamine and 2,3-diacylglucosamine-1-phosphate to form lipid A disaccharide, a precursor of lipid A, a phosphorylated glycolipid that anchors the lipopolysaccharide to the outer membrane of the cell. This Syntrophus aciditrophicus (strain SB) protein is Lipid-A-disaccharide synthase.